The following is a 719-amino-acid chain: CRAL-TRIO domain-containing protein T23G5.2 (719 aa).

The 174-residue stretch at 2–175 (VQTYRSPVRI…FIEELLKKTT (174 aa)) folds into the PRELI/MSF1 domain. The CRAL-TRIO domain occupies 319 to 495 (RPTVIKQYFP…FLGGSCLTTN (177 aa)). The GOLD domain occupies 524–681 (HSTYTSTATW…KCRLIYYYEI (158 aa)). The segment at 700-719 (SSFSSIAPPTPPTPGTPRNP) is disordered. The segment covering 707–719 (PPTPPTPGTPRNP) has biased composition (pro residues).

The sequence is that of CRAL-TRIO domain-containing protein T23G5.2 from Caenorhabditis elegans.